The primary structure comprises 170 residues: Flavodoxin (170 aa).

The 162-residue stretch at 4-165 (IGLFYGTQTG…RIKTWVSQLK (162 aa)) folds into the Flavodoxin-like domain.

Belongs to the flavodoxin family. Requires FMN as cofactor.

In terms of biological role, low-potential electron donor to a number of redox enzymes. The polypeptide is Flavodoxin (isiB) (Synechococcus elongatus (strain ATCC 33912 / PCC 7942 / FACHB-805) (Anacystis nidulans R2)).